Reading from the N-terminus, the 248-residue chain is Peroxisomal membrane protein 11A (248 aa).

Topologically, residues 1-97 (MATKAPEKIT…RSSRWDSNHE (97 aa)) are cytoplasmic. A helical transmembrane segment spans residues 98–118 (LVLLIIAYGGEGLYYFVEQFI). Over 119–220 (WLTKSGLIDA…MTIADIRDGK (102 aa)) the chain is Lumenal. A helical transmembrane segment spans residues 221–241 (GVLSAPNVISSAGLFSAIVST). Residues 242–248 (HKNWISC) are Cytoplasmic-facing.

This sequence belongs to the peroxin-11 family. In terms of assembly, homooligomer. Interacts with ARC5 and FIS1B on peroxisomes. Expressed in developing siliques.

It localises to the peroxisome membrane. In terms of biological role, involved in peroxisomal proliferation. Promotes peroxisomal duplication, aggregation or elongation without fission. The protein is Peroxisomal membrane protein 11A (PEX11A) of Arabidopsis thaliana (Mouse-ear cress).